We begin with the raw amino-acid sequence, 237 residues long: Small ribosomal subunit protein eS4 (237 aa).

Residues isoleucine 37–proline 100 enclose the S4 RNA-binding domain.

This sequence belongs to the eukaryotic ribosomal protein eS4 family.

The polypeptide is Small ribosomal subunit protein eS4 (Caldivirga maquilingensis (strain ATCC 700844 / DSM 13496 / JCM 10307 / IC-167)).